Consider the following 346-residue polypeptide: 3-dehydroquinate synthase (346 aa).

Residues 62 to 67, 96 to 100, 120 to 121, Lys-133, Lys-142, and 160 to 163 contribute to the NAD(+) site; these read DGEEYK, GVISD, TT, and FLRT. Zn(2+) is bound by residues Glu-175, His-234, and His-251.

This sequence belongs to the sugar phosphate cyclases superfamily. Dehydroquinate synthase family. Co(2+) serves as cofactor. Requires Zn(2+) as cofactor. NAD(+) is required as a cofactor.

It localises to the cytoplasm. It carries out the reaction 7-phospho-2-dehydro-3-deoxy-D-arabino-heptonate = 3-dehydroquinate + phosphate. It participates in metabolic intermediate biosynthesis; chorismate biosynthesis; chorismate from D-erythrose 4-phosphate and phosphoenolpyruvate: step 2/7. Functionally, catalyzes the conversion of 3-deoxy-D-arabino-heptulosonate 7-phosphate (DAHP) to dehydroquinate (DHQ). The chain is 3-dehydroquinate synthase from Campylobacter curvus (strain 525.92).